The chain runs to 157 residues: 2-C-methyl-D-erythritol 2,4-cyclodiphosphate synthase (157 aa).

Asp-9 and His-11 together coordinate a divalent metal cation. Residues 9-11 (DVH) and 35-36 (HS) contribute to the 4-CDP-2-C-methyl-D-erythritol 2-phosphate site. His-43 is a binding site for a divalent metal cation. 4-CDP-2-C-methyl-D-erythritol 2-phosphate is bound by residues 57–59 (DIG), 62–66 (FPDTD), 101–107 (AQKPKMA), 133–136 (TTTE), Phe-140, and Arg-143.

It belongs to the IspF family. Homotrimer. The cofactor is a divalent metal cation.

It carries out the reaction 4-CDP-2-C-methyl-D-erythritol 2-phosphate = 2-C-methyl-D-erythritol 2,4-cyclic diphosphate + CMP. The protein operates within isoprenoid biosynthesis; isopentenyl diphosphate biosynthesis via DXP pathway; isopentenyl diphosphate from 1-deoxy-D-xylulose 5-phosphate: step 4/6. Functionally, involved in the biosynthesis of isopentenyl diphosphate (IPP) and dimethylallyl diphosphate (DMAPP), two major building blocks of isoprenoid compounds. Catalyzes the conversion of 4-diphosphocytidyl-2-C-methyl-D-erythritol 2-phosphate (CDP-ME2P) to 2-C-methyl-D-erythritol 2,4-cyclodiphosphate (ME-CPP) with a corresponding release of cytidine 5-monophosphate (CMP). In Halalkalibacterium halodurans (strain ATCC BAA-125 / DSM 18197 / FERM 7344 / JCM 9153 / C-125) (Bacillus halodurans), this protein is 2-C-methyl-D-erythritol 2,4-cyclodiphosphate synthase.